The chain runs to 114 residues: Ribonuclease U2 (114 aa).

Intrachain disulfides connect cysteine 1–cysteine 54, cysteine 9–cysteine 113, and cysteine 55–cysteine 96. Residues aspartate 29, valine 30, alanine 31, asparagine 32, aspartate 37, and tyrosine 39 each contribute to the Ca(2+) site. 39–49 contributes to the substrate binding site; it reads YPHQYYDEASE. Residue histidine 41 is part of the active site. Residue glutamate 62 is the Proton acceptor of the active site. Arginine 85 contacts substrate. The active-site Proton donor is the histidine 101. 108–110 provides a ligand contact to substrate; it reads DGF.

The protein belongs to the ribonuclease U2 family.

It catalyses the reaction [RNA] containing adenosine + H2O = an [RNA fragment]-3'-adenosine-3'-phosphate + a 5'-hydroxy-ribonucleotide-3'-[RNA fragment].. The catalysed reaction is [RNA] containing guanosine + H2O = an [RNA fragment]-3'-guanosine-3'-phosphate + a 5'-hydroxy-ribonucleotide-3'-[RNA fragment].. In Ustilago sphaerogena (Smut fungus), this protein is Ribonuclease U2 (RNU2).